Consider the following 20-residue polypeptide: Non-specific lipid-transfer protein-like protein (20 aa).

It belongs to the plant LTP family.

The protein is Non-specific lipid-transfer protein-like protein of Jatropha curcas (Barbados nut).